We begin with the raw amino-acid sequence, 121 residues long: Large ribosomal subunit protein bL12 (121 aa).

The protein belongs to the bacterial ribosomal protein bL12 family. In terms of assembly, homodimer. Part of the ribosomal stalk of the 50S ribosomal subunit. Forms a multimeric L10(L12)X complex, where L10 forms an elongated spine to which 2 to 4 L12 dimers bind in a sequential fashion. Binds GTP-bound translation factors.

Functionally, forms part of the ribosomal stalk which helps the ribosome interact with GTP-bound translation factors. Is thus essential for accurate translation. The sequence is that of Large ribosomal subunit protein bL12 from Xanthomonas axonopodis pv. citri (strain 306).